The following is a 60-amino-acid chain: Mastoparan-VT3 (60 aa).

An N-terminal signal peptide occupies residues 1–27 (MKNTILILFTAFIALLGFFGMSAEALA). AXPX repeat units lie at residues 27 to 30 (ADPK), 31 to 34 (ADPL), 35 to 38 (AGPN), and 41 to 44 (ADPE). The propeptide occupies 28 to 45 (DPKADPLAGPNPDADPEA). Leu59 carries the leucine amide modification.

It belongs to the MCD family. Mastoparan subfamily. As to expression, expressed by the venom gland.

It is found in the secreted. Functionally, the synthetic peptide shows antimicrobial activities against Gram-negative bacteria (but not against all strains tested), Gram-positive bacteria (all strains tested) and the fungi C.albicans and C.parapsilosis. Exhibits moderate hemolytic activity (25% at 100 ug/ml) against washed human erythrocytes. This is Mastoparan-VT3 from Vespa tropica (Greater banded hornet).